We begin with the raw amino-acid sequence, 299 residues long: GTP cyclohydrolase FolE2 (299 aa).

Belongs to the GTP cyclohydrolase IV family.

It catalyses the reaction GTP + H2O = 7,8-dihydroneopterin 3'-triphosphate + formate + H(+). It functions in the pathway cofactor biosynthesis; 7,8-dihydroneopterin triphosphate biosynthesis; 7,8-dihydroneopterin triphosphate from GTP: step 1/1. Its function is as follows. Converts GTP to 7,8-dihydroneopterin triphosphate. The chain is GTP cyclohydrolase FolE2 from Citrobacter koseri (strain ATCC BAA-895 / CDC 4225-83 / SGSC4696).